The primary structure comprises 212 residues: Probable nicotinate-nucleotide adenylyltransferase (212 aa).

Belongs to the NadD family.

It carries out the reaction nicotinate beta-D-ribonucleotide + ATP + H(+) = deamido-NAD(+) + diphosphate. The protein operates within cofactor biosynthesis; NAD(+) biosynthesis; deamido-NAD(+) from nicotinate D-ribonucleotide: step 1/1. Functionally, catalyzes the reversible adenylation of nicotinate mononucleotide (NaMN) to nicotinic acid adenine dinucleotide (NaAD). The sequence is that of Probable nicotinate-nucleotide adenylyltransferase from Mycobacterium avium (strain 104).